The chain runs to 675 residues: MAAVLRSLRRRDVASATFSAYRSLTGSTKPAYVAQKWSCLARPFSSRPAGNDVIGIDLGTTNSCVSVMEGKNPKVIENSEGARTTPSVVAFNQKGELLVGTPAKRQAVTNPTNTVFGTKRLIGRRFDDPQTQKEMKMVPFKIVKAPNGDAWVEANGQQYSPSQIGAFVLTKMKETAEAYLGKSVSKAVITVPAYFNDAQRQATKDAGRIAGLDVQRIINEPTAAALSYGMNNKEGLIAVFDLGGGTFDVSILEISNGVFEVKATNGDTFLGGEDFDNALLDFLVNEFKRTESIDLSKDRLALQRLREAAEKAKIELSSTSQTEINLPFITADASGAKHLNITLTRSKFEALVNHLIERTKAPCKSCLKDANVSIKDVDEVLLVGGMTRVPKVQEVVLNIFGKSPSKGVNPDEAVAMGAAIQGGILRGDVKELLLLDVTPLSLGIETLGGIFTRLINRNTTIPTKKSQVFSTAADNQTQVGIKVLQGEREMASDNKMLGEFDLVGIPPAPRGLPQIEVTFDIDANGIVTVSAKDKSTGKEQQITIRSSGGLSEDEIEKMVKEAELHAQKDQERKTLIDIRNSADTTIYSIEKSLGEYREKIPSETAKEIEDAVSDLRKAMSGDNVDEIKSKLDAANKAVSKIGEHMSGGSSGGSSAGGSQGGGDQAPEAEYEEVKK.

Residues 1–51 constitute a mitochondrion transit peptide; it reads MAAVLRSLRRRDVASATFSAYRSLTGSTKPAYVAQKWSCLARPFSSRPAGN. A disordered region spans residues 638-675; sequence VSKIGEHMSGGSSGGSSAGGSQGGGDQAPEAEYEEVKK. Residues 648–663 show a composition bias toward gly residues; it reads GSSGGSSAGGSQGGGD. The segment covering 666–675 has biased composition (acidic residues); that stretch reads PEAEYEEVKK.

Belongs to the heat shock protein 70 family.

The protein resides in the mitochondrion. The protein is Heat shock 70 kDa protein, mitochondrial of Phaseolus vulgaris (Kidney bean).